A 404-amino-acid polypeptide reads, in one-letter code: S-adenosylmethionine synthase (404 aa).

Residue 139-144 (GKGSTD) participates in ATP binding.

Belongs to the AdoMet synthase 2 family. Mg(2+) serves as cofactor.

The enzyme catalyses L-methionine + ATP + H2O = S-adenosyl-L-methionine + phosphate + diphosphate. It participates in amino-acid biosynthesis; S-adenosyl-L-methionine biosynthesis; S-adenosyl-L-methionine from L-methionine: step 1/1. Its function is as follows. Catalyzes the formation of S-adenosylmethionine from methionine and ATP. In Saccharolobus islandicus (strain L.S.2.15 / Lassen #1) (Sulfolobus islandicus), this protein is S-adenosylmethionine synthase.